Consider the following 120-residue polypeptide: Lysozyme (120 aa).

The C-type lysozyme domain occupies 1–120 (KRFTRCGLVN…NHSNPDISSC (120 aa)). Cystine bridges form between cysteine 6-cysteine 120, cysteine 27-cysteine 110, cysteine 62-cysteine 76, and cysteine 72-cysteine 90. Active-site residues include glutamate 32 and aspartate 50.

This sequence belongs to the glycosyl hydrolase 22 family. Monomer.

It carries out the reaction Hydrolysis of (1-&gt;4)-beta-linkages between N-acetylmuramic acid and N-acetyl-D-glucosamine residues in a peptidoglycan and between N-acetyl-D-glucosamine residues in chitodextrins.. Its function is as follows. Lysozymes have primarily a bacteriolytic function; those in tissues and body fluids are associated with the monocyte-macrophage system and enhance the activity of immunoagents. The polypeptide is Lysozyme (Antheraea mylitta (Tasar silkworm)).